The sequence spans 496 residues: MSEDLFVSINFPNGKSVKQPIGLYINGEWHKSAETWETVDPSIEEVIAKVYLAGEKEIDYAVKSAKEAFKTWKKVPGSEKGELLMKLAELTEKHADTLAAIEAMDSGKPLVSNARGDVDGTIALLRYCAGWADKIYGQVIPTGPEKLAYAKRTPIGVCGQIVPWNYPLNMAGWKIAPALAAGNCIIIKSAETTPLSLLYFATLVEEAGFPKGVVNIISGLGTVAGSYMAKHPGIDKIAFTGSTKVGVIVQQLAASNLKAVTLECGGKSPFLVFEDADLDQAVKWAALGIMYNSGQICTSNSRIYVQDSVYDKFIELFKKHVIQDYIVGMPFDDNTVVGPVVNKTQYNRIKNYIEQGKKEGAKLVLGDEPLPLKQGYFISPTIFADCSENMTIVKEEIFGPVVAISKFKTEDEAIEKANNTTYGLAAMCFTKDLERAHRVSDELEAGMVFINSTENSDIQAPFGGIKMSGIGNELGSNGIEMYTQIKAVHINFNNKL.

241–246 (GSTKVG) serves as a coordination point for NAD(+). Glu-263 serves as the catalytic Proton acceptor. Cys-297 acts as the Nucleophile in catalysis.

It belongs to the aldehyde dehydrogenase family.

It localises to the cytoplasm. Its subcellular location is the nucleus. This is Putative aldehyde dehydrogenase-like protein C922.07c from Schizosaccharomyces pombe (strain 972 / ATCC 24843) (Fission yeast).